Reading from the N-terminus, the 341-residue chain is Methionine import ATP-binding protein MetN 1 (341 aa).

The ABC transporter domain occupies 2–241 (IEFRQVSKSF…PKTTIAQNFV (240 aa)). 38–45 (GYSGAGKS) serves as a coordination point for ATP.

The protein belongs to the ABC transporter superfamily. Methionine importer (TC 3.A.1.24) family. As to quaternary structure, the complex is composed of two ATP-binding proteins (MetN), two transmembrane proteins (MetI) and a solute-binding protein (MetQ).

The protein resides in the cell membrane. It catalyses the reaction L-methionine(out) + ATP + H2O = L-methionine(in) + ADP + phosphate + H(+). The enzyme catalyses D-methionine(out) + ATP + H2O = D-methionine(in) + ADP + phosphate + H(+). Part of the ABC transporter complex MetNIQ involved in methionine import. Responsible for energy coupling to the transport system. In Staphylococcus aureus (strain MRSA252), this protein is Methionine import ATP-binding protein MetN 1.